Here is a 118-residue protein sequence, read N- to C-terminus: Superoxide-generating NADPH oxidase light chain subunit (118 aa).

Transmembrane regions (helical) follow at residues 9–29, 36–56, 62–82, and 83–103; these read WAAMIGMAACWCLIAGGIMGI, IAIYSICVGGVLYPLLYPLSF, AIFHQYYVAAALMAGLSVLCY, and FLVPTMLAAMVMDISAVVFLI.

The protein belongs to the p22phox family. As to quaternary structure, composed of a heavy chain and a light chain.

The protein localises to the cell membrane. Functionally, critical component of the membrane-bound oxidase of phagocytes that generates superoxide. The chain is Superoxide-generating NADPH oxidase light chain subunit (cybA) from Dictyostelium discoideum (Social amoeba).